The following is a 438-amino-acid chain: MDLGTTKYIIYTELIADGYVEKHDVIGAIFGQTEGLLSNELDLRDLQKSGRIGRIDVDLENINGKSFAKITLPSSLDKVETSILAATLETIDRVGPCFATVKITEVEDIRVSKRQYITNRARSILRKLMDEMIDTYEITEEIKESLRTEEIMEYGPENLPCGPNVVHSDSIIVVEGRADVLNLLRCGIKNTVAVEGTSVPKSIMELTKKKTTTAFTDGDRGGELILKELLQTCDIDYVARAPYGKEVEGTSKKEIMKCLRSKVPVEQIVGNTCNDACNVSKVIEDTPKEIFEPVTHKYYEKVETPVIEPVFEGPVVEEEIVVVEPVKKTETEIIDVDATNEIQADRKFSGVKEIVDSIKNTGNVKFVVDGTEKTNTFKEFLTNIHEIKKMDFFAADMPISQKIVDLLYDKTPIIVGKEINVTKKPVNLRLFSFDEIVA.

The 75-residue stretch at 169 to 243 (DSIIVVEGRA…DIDYVARAPY (75 aa)) folds into the Toprim domain. Mg(2+) is bound by residues Glu175, Asp217, and Asp219.

It belongs to the archaeal DnaG primase family. As to quaternary structure, forms a ternary complex with MCM helicase and DNA. It depends on Mg(2+) as a cofactor.

It carries out the reaction ssDNA + n NTP = ssDNA/pppN(pN)n-1 hybrid + (n-1) diphosphate.. Its function is as follows. RNA polymerase that catalyzes the synthesis of short RNA molecules used as primers for DNA polymerase during DNA replication. The chain is DNA primase DnaG from Methanococcus maripaludis (strain C5 / ATCC BAA-1333).